The chain runs to 326 residues: Nicotianamine synthase 2 (326 aa).

The protein belongs to the nicotianamine synthase (NAS)-like family. As to expression, expressed in roots.

The enzyme catalyses 3 S-adenosyl-L-methionine = nicotianamine + 3 S-methyl-5'-thioadenosine + 3 H(+). Functionally, synthesizes nicotianamine, a polyamine that is the first intermediate in the synthesis of the phytosiderophores of the mugineic acid type found in gramineae which serve as a sensor for the physiological iron status within the plant, and/or might be involved in the transport of iron. This is Nicotianamine synthase 2 (NAS2) from Oryza sativa subsp. indica (Rice).